A 327-amino-acid polypeptide reads, in one-letter code: MHSKVIIIGSGPAGHTAAIYLARAELKPVLYEGMLANGIAAGGQLTTTTDVENYPGFPDGIMGPLLMEKFREQSVKYGTCIITETVSKLDLSKRPFKYWCESDENTCHTADVVVMATGAYARRLHIPGEETYWQRGISACAVCDGAAPIFRGKCLSVVGGGDSAAEESLFLTRYATKVYLLVRRDKLRASAVMAKRLLNHPKIEVIWNTVVLRSLGDGHLLNRLEIKNVKTQVVSELHVSGLFYAIGHEPATALVRGQVECDDNGYIITKNGGPETNIKGFFAAGDVQDKKWRQAVTSAGSGCMAGLAAERLLAEEEEMKNIEKNKK.

FAD contacts are provided by residues 10-13, 39-40, glutamine 44, asparagine 53, valine 86, cysteine 143, aspartate 286, and 293-295; these read SGPA, IA, and RQA. Residues cysteine 140 and cysteine 143 are joined by a disulfide bond.

Belongs to the class-II pyridine nucleotide-disulfide oxidoreductase family. In terms of assembly, homodimer. FAD serves as cofactor.

Its subcellular location is the cytoplasm. It catalyses the reaction [thioredoxin]-dithiol + NADP(+) = [thioredoxin]-disulfide + NADPH + H(+). Component of the thioredoxin-thioredoxin reductase system which may be involved in biosynthesis of penicillins and cephalosporins and may be important in determining the thiol-disulfide redox balance. This chain is Thioredoxin reductase (TRR1), found in Pneumocystis jirovecii (Human pneumocystis pneumonia agent).